The primary structure comprises 539 residues: Probable protein kinase UbiB (539 aa).

The Protein kinase domain maps to Arg125–Leu493. Residues Leu131 to Val139 and Lys153 each bind ATP. The active-site Proton acceptor is the Asp288. 2 helical membrane passes run Leu495–Ala515 and Leu517–Val537.

This sequence belongs to the ABC1 family. UbiB subfamily.

Its subcellular location is the cell inner membrane. The protein operates within cofactor biosynthesis; ubiquinone biosynthesis [regulation]. Functionally, is probably a protein kinase regulator of UbiI activity which is involved in aerobic coenzyme Q (ubiquinone) biosynthesis. The polypeptide is Probable protein kinase UbiB (Pseudomonas putida (strain W619)).